A 195-amino-acid polypeptide reads, in one-letter code: MRHADVTRDTLETRISVRIDLDGTGKSVLATGVPFFDHMLDQIARHGAIDLEVRAEGDTHIDDHHTVEDVGITLGQAFAKALGDKKGILRYGHAYVPLDEALSRVVVDFSGRPGLHYFVDYTRARIGNFDVDLAREFFQGFVNHAGVTLHVDNLRGDNAHHQCETIFKAFGRALRMAATRDERLAGAIPSTKGAL.

Belongs to the imidazoleglycerol-phosphate dehydratase family.

It is found in the cytoplasm. It catalyses the reaction D-erythro-1-(imidazol-4-yl)glycerol 3-phosphate = 3-(imidazol-4-yl)-2-oxopropyl phosphate + H2O. Its pathway is amino-acid biosynthesis; L-histidine biosynthesis; L-histidine from 5-phospho-alpha-D-ribose 1-diphosphate: step 6/9. The chain is Imidazoleglycerol-phosphate dehydratase from Azoarcus sp. (strain BH72).